Reading from the N-terminus, the 203-residue chain is IMP cyclohydrolase (203 aa).

It belongs to the archaeal IMP cyclohydrolase family.

It carries out the reaction IMP + H2O = 5-formamido-1-(5-phospho-D-ribosyl)imidazole-4-carboxamide. The protein operates within purine metabolism; IMP biosynthesis via de novo pathway; IMP from 5-formamido-1-(5-phospho-D-ribosyl)imidazole-4-carboxamide: step 1/1. Catalyzes the cyclization of 5-formylamidoimidazole-4-carboxamide ribonucleotide to IMP. This Methanococcus aeolicus (strain ATCC BAA-1280 / DSM 17508 / OCM 812 / Nankai-3) protein is IMP cyclohydrolase.